The primary structure comprises 89 residues: Small ribosomal subunit protein uS17 (89 aa).

The protein belongs to the universal ribosomal protein uS17 family. In terms of assembly, part of the 30S ribosomal subunit.

Functionally, one of the primary rRNA binding proteins, it binds specifically to the 5'-end of 16S ribosomal RNA. This chain is Small ribosomal subunit protein uS17, found in Ralstonia pickettii (strain 12J).